The chain runs to 1024 residues: Protein translocase subunit SecA (1024 aa).

Residues Q143, 161 to 165, and D661 contribute to the ATP site; that span reads GEGKT. A disordered region spans residues 970 to 1024; it reads HKAAESVYTASSDEPETNQEESPQQPAIAEKKPGRNDLCPCGSGKKYKNCHGQQP. Zn(2+) contacts are provided by C1008, C1010, C1019, and H1020.

The protein belongs to the SecA family. Monomer and homodimer. Part of the essential Sec protein translocation apparatus which comprises SecA, SecYEG and auxiliary proteins SecDF. Other proteins may also be involved. The cofactor is Zn(2+).

Its subcellular location is the cell inner membrane. The protein localises to the cytoplasm. The enzyme catalyses ATP + H2O + cellular proteinSide 1 = ADP + phosphate + cellular proteinSide 2.. Part of the Sec protein translocase complex. Interacts with the SecYEG preprotein conducting channel. Has a central role in coupling the hydrolysis of ATP to the transfer of proteins into and across the cell membrane, serving as an ATP-driven molecular motor driving the stepwise translocation of polypeptide chains across the membrane. The protein is Protein translocase subunit SecA of Pelodictyon phaeoclathratiforme (strain DSM 5477 / BU-1).